The following is a 148-amino-acid chain: Large ribosomal subunit protein bL9 (148 aa).

The protein belongs to the bacterial ribosomal protein bL9 family.

Functionally, binds to the 23S rRNA. This is Large ribosomal subunit protein bL9 from Methylobacillus flagellatus (strain ATCC 51484 / DSM 6875 / VKM B-1610 / KT).